The sequence spans 118 residues: Large ribosomal subunit protein uL24 (118 aa).

It belongs to the universal ribosomal protein uL24 family. Part of the 50S ribosomal subunit.

Its function is as follows. One of two assembly initiator proteins, it binds directly to the 5'-end of the 23S rRNA, where it nucleates assembly of the 50S subunit. One of the proteins that surrounds the polypeptide exit tunnel on the outside of the subunit. This chain is Large ribosomal subunit protein uL24, found in Prochlorococcus marinus (strain MIT 9515).